A 242-amino-acid chain; its full sequence is DNA repair protein RecO (242 aa).

Belongs to the RecO family. As to quaternary structure, monomer.

Involved in DNA repair and RecF pathway recombination. This Shigella boydii serotype 18 (strain CDC 3083-94 / BS512) protein is DNA repair protein RecO.